The following is a 410-amino-acid chain: Cytochrome P450 105A3 (410 aa).

A heme-binding site is contributed by C359.

It belongs to the cytochrome P450 family. Monomer. Heme is required as a cofactor.

Catalyzes the hydroxylation of sodium ML-236B carboxylate to pravastatin. This is Cytochrome P450 105A3 (cyp105A3) from Streptomyces carbophilus.